The sequence spans 295 residues: Tyrosine transport system permease protein (295 aa).

The next 8 membrane-spanning stretches (helical) occupy residues 3–23, 57–77, 81–101, 122–142, 173–193, 200–220, 232–252, and 256–276; these read GIIS…GVYI, VVAT…TGIL, FKIS…SINL, ISPI…LDLF, ILGL…MAQF, NMGI…ITLF, IIVG…LGML, and LKLI…LNIS.

Belongs to the binding-protein-dependent transport system permease family. As to quaternary structure, the complex is probably composed of two ATP-binding proteins (CDR20291_0806), two transmembrane proteins (CDR20291_0807) and a solute-binding protein (CDR20291_0805).

The protein resides in the cell membrane. Functionally, probably part of an ABC transporter complex involved in tyrosine uptake. May also import phenylalanine. Probably responsible for the translocation of the substrate across the membrane. The protein is Tyrosine transport system permease protein of Clostridioides difficile (strain R20291) (Peptoclostridium difficile).